Here is a 1153-residue protein sequence, read N- to C-terminus: Probable RNA-dependent RNA polymerase 3 (1153 aa).

It belongs to the RdRP family. Expressed in shoot apical meristem (SAM) and panicles.

It carries out the reaction RNA(n) + a ribonucleoside 5'-triphosphate = RNA(n+1) + diphosphate. Its function is as follows. Probably involved in the RNA silencing pathway and required for the generation of small interfering RNAs (siRNAs). In Oryza sativa subsp. japonica (Rice), this protein is Probable RNA-dependent RNA polymerase 3 (RDR3).